Reading from the N-terminus, the 430-residue chain is Glutamate-1-semialdehyde 2,1-aminomutase (430 aa).

The residue at position 267 (K267) is an N6-(pyridoxal phosphate)lysine.

Belongs to the class-III pyridoxal-phosphate-dependent aminotransferase family. HemL subfamily. Homodimer. Pyridoxal 5'-phosphate serves as cofactor.

It localises to the cytoplasm. It catalyses the reaction (S)-4-amino-5-oxopentanoate = 5-aminolevulinate. It functions in the pathway porphyrin-containing compound metabolism; protoporphyrin-IX biosynthesis; 5-aminolevulinate from L-glutamyl-tRNA(Glu): step 2/2. In Lawsonia intracellularis (strain PHE/MN1-00), this protein is Glutamate-1-semialdehyde 2,1-aminomutase.